A 245-amino-acid polypeptide reads, in one-letter code: Large ribosomal subunit protein uL2 (245 aa).

The interval 198-245 is disordered; it reads VSHPHGGGSHKRPGKPTTVARTAPPGQKVGHIAARKTGRAKRRAATKR. Positions 230 to 245 are enriched in basic residues; the sequence is AARKTGRAKRRAATKR.

It belongs to the universal ribosomal protein uL2 family. Part of the 50S ribosomal subunit. Forms a bridge to the 30S subunit in the 70S ribosome.

One of the primary rRNA binding proteins. Required for association of the 30S and 50S subunits to form the 70S ribosome, for tRNA binding and peptide bond formation. It has been suggested to have peptidyltransferase activity; this is somewhat controversial. Makes several contacts with the 16S rRNA in the 70S ribosome. The protein is Large ribosomal subunit protein uL2 of Korarchaeum cryptofilum (strain OPF8).